Consider the following 302-residue polypeptide: Single-stranded DNA-binding protein (302 aa).

Residues 3–7 are LAST; it reads KRKST. Residues His65, Cys78, Cys88, and Cys91 each contribute to the Zn(2+) site. The interval 273–302 is disordered; that stretch reads TKTEDDFMSSSSGSSSSADDTDLDDLLNDL. Positions 280–290 are enriched in low complexity; the sequence is MSSSSGSSSSA. A compositionally biased stretch (acidic residues) spans 291–302; the sequence is DDTDLDDLLNDL.

Belongs to the Tequatrovirus single-stranded DNA-binding protein family. Homodimer in the absence of DNA, monomer when binding DNA. Interacts with the DNA helicase assembly protein; a ternary complex between the helicase assembly protein, the single-stranded DNA-binding protein and ssDNA is an obligatory intermediate in the helicase loading mechanism. Part of the replicase complex that includes the DNA polymerase, the polymerase clamp, the clamp loader complex, the single-stranded DNA binding protein, the primase, the DnaB-like SF4 replicative helicase and the helicase assembly factor. Interacts (via C-terminus) with the viral SF1 dDA helicase. Interacts with the viral SF2 UvsW repair helicase.

Single-stranded DNA-binding protein that participates in viral DNA replication, recombination, and repair. Coats the lagging-strand ssDNA as the replication fork advances. Stimulates the activities of viral DNA polymerase and DnaB-like SF4 replicative helicase, probably via its interaction with the helicase assembly factor. Together with DnaB-like SF4 replicative helicase and the helicase assembly factor, promotes pairing of two homologous DNA molecules containing complementary single-stranded regions and mediates homologous DNA strand exchange. Also promotes the formation of joint molecules. mRNA specific autogenous translational repressor. This Escherichia coli (Bacteriophage T2) protein is Single-stranded DNA-binding protein.